The primary structure comprises 206 residues: Thiamine-phosphate synthase (206 aa).

4-amino-2-methyl-5-(diphosphooxymethyl)pyrimidine contacts are provided by residues 35–39 (QLRHK) and Asn-67. Positions 68 and 87 each coordinate Mg(2+). Ser-106 is a 4-amino-2-methyl-5-(diphosphooxymethyl)pyrimidine binding site. 132-134 (TGS) is a binding site for 2-[(2R,5Z)-2-carboxy-4-methylthiazol-5(2H)-ylidene]ethyl phosphate. 4-amino-2-methyl-5-(diphosphooxymethyl)pyrimidine is bound at residue Lys-135. Gly-163 is a 2-[(2R,5Z)-2-carboxy-4-methylthiazol-5(2H)-ylidene]ethyl phosphate binding site.

Belongs to the thiamine-phosphate synthase family. Mg(2+) is required as a cofactor.

It carries out the reaction 2-[(2R,5Z)-2-carboxy-4-methylthiazol-5(2H)-ylidene]ethyl phosphate + 4-amino-2-methyl-5-(diphosphooxymethyl)pyrimidine + 2 H(+) = thiamine phosphate + CO2 + diphosphate. The catalysed reaction is 2-(2-carboxy-4-methylthiazol-5-yl)ethyl phosphate + 4-amino-2-methyl-5-(diphosphooxymethyl)pyrimidine + 2 H(+) = thiamine phosphate + CO2 + diphosphate. It catalyses the reaction 4-methyl-5-(2-phosphooxyethyl)-thiazole + 4-amino-2-methyl-5-(diphosphooxymethyl)pyrimidine + H(+) = thiamine phosphate + diphosphate. The protein operates within cofactor biosynthesis; thiamine diphosphate biosynthesis; thiamine phosphate from 4-amino-2-methyl-5-diphosphomethylpyrimidine and 4-methyl-5-(2-phosphoethyl)-thiazole: step 1/1. Condenses 4-methyl-5-(beta-hydroxyethyl)thiazole monophosphate (THZ-P) and 2-methyl-4-amino-5-hydroxymethyl pyrimidine pyrophosphate (HMP-PP) to form thiamine monophosphate (TMP). This chain is Thiamine-phosphate synthase, found in Chlorobium phaeobacteroides (strain DSM 266 / SMG 266 / 2430).